A 240-amino-acid chain; its full sequence is MPLASLEVGQHLYWQIGGLKVHGQVLITSWIVIGILVIVSVLATRKVERIPSGLQNFMEYALEFVRDLTKNQIGEKEYRPWVPFIGTLFLFIFVSNWSGALFPWKLISLPEGELAAPTNDINTTVALALCTSFVYFYAGFRKKGLGYFRKYIEPTPVLLPIAILEDFTKPLSLSFRLFGNILADELVVAVLVLLVPLIVPLPVMLLGLFTSGIQALVFATLAGAYIHESLEGHGEEEEAH.

The next 5 membrane-spanning stretches (helical) occupy residues 23–43 (GQVL…SVLA), 82–102 (VPFI…GALF), 120–140 (DINT…YAGF), 186–206 (LVVA…VMLL), and 207–227 (GLFT…AYIH).

The protein belongs to the ATPase A chain family. In terms of assembly, F-type ATPases have 2 components, CF(1) - the catalytic core - and CF(0) - the membrane proton channel. CF(1) has five subunits: alpha(3), beta(3), gamma(1), delta(1), epsilon(1). CF(0) has four main subunits: a, b, b' and c.

The protein resides in the cellular thylakoid membrane. Functionally, key component of the proton channel; it plays a direct role in the translocation of protons across the membrane. The sequence is that of ATP synthase subunit a 1 from Acaryochloris marina (strain MBIC 11017).